A 182-amino-acid polypeptide reads, in one-letter code: Gamma-crystallin N (182 aa).

Beta/gamma crystallin 'Greek key' domains lie at Gly-6–Ser-46, Gly-47–Gly-89, and Phe-95–Gly-136. The interval Leu-153 to Leu-182 is disordered. The segment covering Lys-169–Leu-182 has biased composition (polar residues).

It belongs to the beta/gamma-crystallin family. Monomer. In terms of tissue distribution, not specifically expressed in eye.

This Homo sapiens (Human) protein is Gamma-crystallin N.